The chain runs to 244 residues: ATP synthase subunit b 2 (244 aa).

The helical transmembrane segment at 2 to 22 (LIDWFTIVAQIINFLILVFLL) threads the bilayer.

Belongs to the ATPase B chain family. In terms of assembly, F-type ATPases have 2 components, F(1) - the catalytic core - and F(0) - the membrane proton channel. F(1) has five subunits: alpha(3), beta(3), gamma(1), delta(1), epsilon(1). F(0) has four main subunits: a(1), b(1), b'(1) and c(10-14). The alpha and beta chains form an alternating ring which encloses part of the gamma chain. F(1) is attached to F(0) by a central stalk formed by the gamma and epsilon chains, while a peripheral stalk is formed by the delta, b and b' chains.

It is found in the cellular thylakoid membrane. F(1)F(0) ATP synthase produces ATP from ADP in the presence of a proton or sodium gradient. F-type ATPases consist of two structural domains, F(1) containing the extramembraneous catalytic core and F(0) containing the membrane proton channel, linked together by a central stalk and a peripheral stalk. During catalysis, ATP synthesis in the catalytic domain of F(1) is coupled via a rotary mechanism of the central stalk subunits to proton translocation. Functionally, component of the F(0) channel, it forms part of the peripheral stalk, linking F(1) to F(0). This Crocosphaera subtropica (strain ATCC 51142 / BH68) (Cyanothece sp. (strain ATCC 51142)) protein is ATP synthase subunit b 2.